We begin with the raw amino-acid sequence, 258 residues long: Putative cysteine-rich repeat secretory protein 16 (258 aa).

The signal sequence occupies residues 1–30 (MYYSSPTCFVLITIFAVVVTQLIFMRTVSS). Gnk2-homologous domains follow at residues 37-139 (YLNH…PFDT) and 144-247 (DKDN…LYPF).

Belongs to the cysteine-rich repeat secretory protein family.

It localises to the secreted. The chain is Putative cysteine-rich repeat secretory protein 16 (CRRSP16) from Arabidopsis thaliana (Mouse-ear cress).